Here is a 287-residue protein sequence, read N- to C-terminus: Bifunctional protein FolD (287 aa).

Residues 171-173 (GHS) and Ile-237 each bind NADP(+).

It belongs to the tetrahydrofolate dehydrogenase/cyclohydrolase family. In terms of assembly, homodimer.

The enzyme catalyses (6R)-5,10-methylene-5,6,7,8-tetrahydrofolate + NADP(+) = (6R)-5,10-methenyltetrahydrofolate + NADPH. The catalysed reaction is (6R)-5,10-methenyltetrahydrofolate + H2O = (6R)-10-formyltetrahydrofolate + H(+). Its pathway is one-carbon metabolism; tetrahydrofolate interconversion. Functionally, catalyzes the oxidation of 5,10-methylenetetrahydrofolate to 5,10-methenyltetrahydrofolate and then the hydrolysis of 5,10-methenyltetrahydrofolate to 10-formyltetrahydrofolate. The protein is Bifunctional protein FolD of Methanosarcina barkeri (strain Fusaro / DSM 804).